The chain runs to 236 residues: T-cell surface glycoprotein CD8 alpha chain (236 aa).

The first 26 residues, 1–26, serve as a signal peptide directing secretion; the sequence is MASRVICFLSLNLLLLDVITRLQVSG. One can recognise an Ig-like V-type domain in the interval 27–130; sequence QLQLSPKKVD…ITSNSVMYFS (104 aa). Topologically, residues 27–189 are extracellular; the sequence is QLQLSPKKVD…MGLGFACDIY (163 aa). Cysteine 47 and cysteine 119 are joined by a disulfide. Residue asparagine 63 is glycosylated (N-linked (GlcNAc...) asparagine). Residue threonine 144 is glycosylated (O-linked (GalNAc...) threonine; partial). Threonine 148, threonine 152, threonine 158, and threonine 160 each carry an O-linked (GalNAc...) threonine glycan. Positions 150–170 are disordered; the sequence is APTPVPPPTGTPRPLRPEACR. Residues 190–210 form a helical membrane-spanning segment; it reads IWAPLAGICAVLLLSLVITLI. The S-palmitoyl cysteine moiety is linked to residue cysteine 211. The Cytoplasmic segment spans residues 211 to 236; that stretch reads CCHRNRRRVCKCPRPLVKPRPSEKFV.

Forms disulfide-linked heterodimers with CD8B at the cell surface. Also forms homodimers in several cell types including NK-cells or peripheral blood T-lymphocytes. Interacts with the MHC class I HLA-A/B2M dimer. Interacts with LCK in a zinc-dependent manner. Palmitoylated, but association with CD8B seems to be more important for the enrichment of CD8A in lipid rafts. In terms of processing, O-glycosylated. Post-translationally, phosphorylated in cytotoxic T-lymphocytes (CTLs) following activation.

It localises to the cell membrane. Functionally, integral membrane glycoprotein that plays an essential role in the immune response and serves multiple functions in responses against both external and internal offenses. In T-cells, functions primarily as a coreceptor for MHC class I molecule:peptide complex. The antigens presented by class I peptides are derived from cytosolic proteins while class II derived from extracellular proteins. Interacts simultaneously with the T-cell receptor (TCR) and the MHC class I proteins presented by antigen presenting cells (APCs). In turn, recruits the Src kinase LCK to the vicinity of the TCR-CD3 complex. LCK then initiates different intracellular signaling pathways by phosphorylating various substrates ultimately leading to lymphokine production, motility, adhesion and activation of cytotoxic T-lymphocytes (CTLs). This mechanism enables CTLs to recognize and eliminate infected cells and tumor cells. In NK-cells, the presence of CD8A homodimers at the cell surface provides a survival mechanism allowing conjugation and lysis of multiple target cells. CD8A homodimer molecules also promote the survival and differentiation of activated lymphocytes into memory CD8 T-cells. In Rattus norvegicus (Rat), this protein is T-cell surface glycoprotein CD8 alpha chain (Cd8a).